Here is a 497-residue protein sequence, read N- to C-terminus: Pentatricopeptide repeat-containing protein At2g36240 (497 aa).

PPR repeat units follow at residues 156 to 186 (LEPI…MKRL), 192 to 226 (NVGV…RAKP), 227 to 261 (DVCT…GCEP), 262 to 296 (NVVS…GCRF), 297 to 331 (SEAT…RVLP), 332 to 366 (SEFD…GQTP), 367 to 401 (CFIA…GILP), 402 to 436 (DSVT…GYEP), and 437 to 471 (DETT…DMLP).

The protein belongs to the PPR family. P subfamily.

The sequence is that of Pentatricopeptide repeat-containing protein At2g36240 from Arabidopsis thaliana (Mouse-ear cress).